Here is a 480-residue protein sequence, read N- to C-terminus: NADH-quinone oxidoreductase subunit N (480 aa).

Helical transmembrane passes span 12-32, 41-61, 80-100, 105-125, 130-150, 165-185, 204-224, 237-257, 275-295, 300-320, 326-346, 372-392, 406-428, and 450-470; these read LLIP…LGVF, LVQW…LFLV, FSKT…MPYL, LGKI…MMMV, LIAM…LAAF, FVLG…VYGF, IGLT…VSAA, APTP…IVLL, VIWM…LTQQ, LMAY…AAAS, ALLV…ATIL, GWSM…VGFF, LMIL…LRIV, and IARI…WLVF.

It belongs to the complex I subunit 2 family. As to quaternary structure, NDH-1 is composed of 14 different subunits. Subunits NuoA, H, J, K, L, M, N constitute the membrane sector of the complex.

The protein resides in the cell inner membrane. It carries out the reaction a quinone + NADH + 5 H(+)(in) = a quinol + NAD(+) + 4 H(+)(out). Its function is as follows. NDH-1 shuttles electrons from NADH, via FMN and iron-sulfur (Fe-S) centers, to quinones in the respiratory chain. The immediate electron acceptor for the enzyme in this species is believed to be ubiquinone. Couples the redox reaction to proton translocation (for every two electrons transferred, four hydrogen ions are translocated across the cytoplasmic membrane), and thus conserves the redox energy in a proton gradient. The sequence is that of NADH-quinone oxidoreductase subunit N from Maricaulis maris (strain MCS10) (Caulobacter maris).